The primary structure comprises 360 residues: S-adenosylmethionine:tRNA ribosyltransferase-isomerase (360 aa).

It belongs to the QueA family. Monomer.

It localises to the cytoplasm. It catalyses the reaction 7-aminomethyl-7-carbaguanosine(34) in tRNA + S-adenosyl-L-methionine = epoxyqueuosine(34) in tRNA + adenine + L-methionine + 2 H(+). It participates in tRNA modification; tRNA-queuosine biosynthesis. Transfers and isomerizes the ribose moiety from AdoMet to the 7-aminomethyl group of 7-deazaguanine (preQ1-tRNA) to give epoxyqueuosine (oQ-tRNA). The polypeptide is S-adenosylmethionine:tRNA ribosyltransferase-isomerase (Burkholderia mallei (strain NCTC 10247)).